Consider the following 619-residue polypeptide: ESX-2 secretion system protein EccA2 (619 aa).

373–380 contributes to the ATP binding site; it reads GPPGTGKT.

It belongs to the CbxX/CfxQ family. As to quaternary structure, part of the ESX-2 / type VII secretion system (T7SS), which is composed of cytosolic and membrane components.

The protein resides in the cytoplasm. Functionally, part of an ESX-2 / type VII specialized secretion system (T7SS), which exports several proteins. May have ATPase activity and might provide energy for the export of ESX-2 substrates. This is ESX-2 secretion system protein EccA2 from Mycobacterium bovis (strain ATCC BAA-935 / AF2122/97).